A 141-amino-acid chain; its full sequence is Hemoglobin subunit alpha (141 aa).

Positions 1-141 (VLSPADKSNV…VSTVLTSKYR (141 aa)) constitute a Globin domain. Residue S3 is modified to Phosphoserine. N6-succinyllysine occurs at positions 7 and 11. K16 carries the post-translational modification N6-acetyllysine; alternate. K16 carries the post-translational modification N6-succinyllysine; alternate. A Phosphotyrosine modification is found at Y24. A Phosphoserine modification is found at S35. Residue K40 is modified to N6-succinyllysine. S49 is subject to Phosphoserine. O2 is bound at residue H58. H87 is a heme b binding site. S102 carries the phosphoserine modification. T108 carries the post-translational modification Phosphothreonine. Phosphoserine is present on residues S124 and S131. 2 positions are modified to phosphothreonine: T134 and T137. S138 carries the phosphoserine modification.

Belongs to the globin family. As to quaternary structure, heterotetramer of two alpha chains and two beta chains. As to expression, red blood cells.

Functionally, involved in oxygen transport from the lung to the various peripheral tissues. Hemopressin acts as an antagonist peptide of the cannabinoid receptor CNR1. Hemopressin-binding efficiently blocks cannabinoid receptor CNR1 and subsequent signaling. The protein is Hemoglobin subunit alpha (HBA) of Saguinus oedipus (Cotton-top tamarin).